We begin with the raw amino-acid sequence, 243 residues long: Pyridoxine 5'-phosphate synthase (243 aa).

N9 is a 3-amino-2-oxopropyl phosphate binding site. Residue 11–12 (DH) participates in 1-deoxy-D-xylulose 5-phosphate binding. R20 is a 3-amino-2-oxopropyl phosphate binding site. The Proton acceptor role is filled by H45. 2 residues coordinate 1-deoxy-D-xylulose 5-phosphate: R47 and H52. Catalysis depends on E72, which acts as the Proton acceptor. T102 is a binding site for 1-deoxy-D-xylulose 5-phosphate. The active-site Proton donor is H193. Residues G194 and 215–216 (GH) each bind 3-amino-2-oxopropyl phosphate.

This sequence belongs to the PNP synthase family. As to quaternary structure, homooctamer; tetramer of dimers.

It is found in the cytoplasm. It carries out the reaction 3-amino-2-oxopropyl phosphate + 1-deoxy-D-xylulose 5-phosphate = pyridoxine 5'-phosphate + phosphate + 2 H2O + H(+). It participates in cofactor biosynthesis; pyridoxine 5'-phosphate biosynthesis; pyridoxine 5'-phosphate from D-erythrose 4-phosphate: step 5/5. In terms of biological role, catalyzes the complicated ring closure reaction between the two acyclic compounds 1-deoxy-D-xylulose-5-phosphate (DXP) and 3-amino-2-oxopropyl phosphate (1-amino-acetone-3-phosphate or AAP) to form pyridoxine 5'-phosphate (PNP) and inorganic phosphate. The polypeptide is Pyridoxine 5'-phosphate synthase (Yersinia pseudotuberculosis serotype I (strain IP32953)).